The primary structure comprises 470 residues: Poly(A) polymerase catalytic subunit (470 aa).

Active-site residues include D192 and D194.

The protein belongs to the poxviridae poly(A) polymerase catalytic subunit family. Heterodimer of a large (catalytic) subunit and a small (regulatory) subunit.

The enzyme catalyses RNA(n) + ATP = RNA(n)-3'-adenine ribonucleotide + diphosphate. Its function is as follows. Polymerase that creates the 3'-poly(A) tail of mRNA's. This is Poly(A) polymerase catalytic subunit (PAPL) from Sus scrofa (Pig).